Consider the following 659-residue polypeptide: UDP-glucuronate:xylan alpha-glucuronosyltransferase 1 (659 aa).

The segment covering 1-14 has biased composition (low complexity); it reads MANSPAAPAPTTTT. The segment at 1–20 is disordered; it reads MANSPAAPAPTTTTGGDSRR. Residues 70–90 traverse the membrane as a helical; Signal-anchor for type II membrane protein segment; it reads FQIVKLLLFILLSATLFTIIY. Mn(2+)-binding residues include Asp416 and Asp418. Substrate contacts are provided by residues 416–418, 445–447, 472–476, and 526–531; these read DAD, NSG, NGGDQ, and HYLGMK. His526 contacts Mn(2+).

This sequence belongs to the glycosyltransferase 8 family. Glycogenin subfamily. It depends on Mn(2+) as a cofactor.

It is found in the golgi apparatus membrane. Functionally, glycosyltransferase required for the addition of both glucuronic acid and 4-O-methylglucuronic acid branches to xylan in stem cell walls. In association with GUX2, is responsible for almost all of the substitutions of the xylan backbone in stem glucuronoxylan. This Arabidopsis thaliana (Mouse-ear cress) protein is UDP-glucuronate:xylan alpha-glucuronosyltransferase 1 (GUX1).